Here is a 242-residue protein sequence, read N- to C-terminus: MGRGPSIEGRKNASDAKRGKIFTKIIREISVAARAGGGDPSNNPRLRTAMDKGLSSNMSKDVIERAIKKATGELEGVEYEEVRYEGYAPGGVAVIVDCLTDNRVRAVADVRHAFSKCGGNMGTDGSVAFMFKRLGVLSFAAGADEDAVTEAAIEAGADDVVVYPEDGAIDVLTAPDTFAQVKQALATAGFEPAHAEITFRAENDIAVDGDTAVQVRKLLDMLEDLDDVQDVYSNVDQASLGA.

This sequence belongs to the TACO1 family.

It localises to the cytoplasm. This is Probable transcriptional regulatory protein XCC3027 from Xanthomonas campestris pv. campestris (strain ATCC 33913 / DSM 3586 / NCPPB 528 / LMG 568 / P 25).